Here is a 684-residue protein sequence, read N- to C-terminus: Sec1 family domain-containing protein 2 (684 aa).

It belongs to the STXBP/unc-18/SEC1 family.

In terms of biological role, may be involved in protein transport. This Mus musculus (Mouse) protein is Sec1 family domain-containing protein 2 (Scfd2).